The primary structure comprises 1237 residues: Anion exchange protein 2 (1237 aa).

The tract at residues 1 to 238 is disordered; that stretch reads MSSAPRRPAS…YNLQERRRIG (238 aa). The Cytoplasmic segment spans residues 1-703; it reads MSSAPRRPAS…SDFRDALDPQ (703 aa). Composition is skewed to basic and acidic residues over residues 38–48 and 57–74; these read LRTLGVERFEE and GGEE…EYHR. Composition is skewed to basic residues over residues 75–84 and 93–109; these read QSSHHIHHPL and RRRK…RRRP. Residues serine 112, serine 131, serine 144, serine 170, serine 172, and serine 239 each carry the phosphoserine modification. Over residues 119-132 the composition is skewed to acidic residues; it reads TIEEGEEDEEEASE. Residue threonine 253 is modified to Phosphothreonine. An N6-methyllysine modification is found at lysine 270. Positions 285 to 316 are disordered; that stretch reads VRKNAKGSTQAAREGREPGPTPRARPRAPHKP. Residue serine 439 is modified to Phosphoserine. The tract at residues 445 to 466 is disordered; sequence SLLGHHHAQGTESDPHVTEPLI. A run of 4 helical transmembrane segments spans residues 704-727, 733-770, 790-812, and 822-843; these read CLAA…GLLG, LIGV…LLVF, VWIG…SFLV, and IFAF…IKIF. The interval 704 to 1237 is membrane (anion exchange); that stretch reads CLAAVIFIYF…DEYNEMPMPV (534 aa). Residues 844–896 lie on the Extracellular side of the membrane; sequence QEHPLHGCSGSNDSEAGSSSSSNMTWATTILVPDNSSASGQSGQEKPRGQPNT. N-linked (GlcNAc...) asparagine glycans are attached at residues asparagine 855, asparagine 866, and asparagine 878. The helical transmembrane segment at 897–914 threads the bilayer; sequence ALLSLVLMAGTFFIAFFL. Residues 915-929 are Cytoplasmic-facing; that stretch reads RKFKNSRFFPGRIRR. A run of 5 helical transmembrane segments spans residues 930-950, 984-1006, 1032-1053, 1087-1132, and 1159-1195; these read VIGD…DYSI, PFPV…LIFM, LLLI…LAAA, VTGL…IQFY, and MHLF…TVPL. Residue cysteine 1169 is the site of S-palmitoyl cysteine attachment.

Belongs to the anion exchanger (TC 2.A.31) family. As to expression, expressed in the choroid plexus epithelium (at protein level). Expressed in the parotid gland and sublingual salivary gland acinar cells (at protein level). In terms of tissue distribution, widely expressed at similar levels in all tissues examined. Expressed in the testis. Predominantly expressed in stomach although they are also detected at lower levels in other tissues. Expressed in the testis. As to expression, stomach-specific. In terms of tissue distribution, expressed at slightly higher levels in lung and stomach than in other tissues.

It localises to the apical cell membrane. The protein resides in the basolateral cell membrane. The catalysed reaction is hydrogencarbonate(in) + chloride(out) = hydrogencarbonate(out) + chloride(in). Inhibited by 4,4'-diisothiocyanatostilbene-2,2'-disulfonic acid (DIDS) and acetazolamide. Muscarinic receptor stimulation enhances activity through a Ca(2+)-dependent mechanism. In terms of biological role, sodium-independent anion exchanger which mediates the electroneutral exchange of chloride for bicarbonate ions across the cell membrane. Plays an important role in osteoclast differentiation and function. Regulates bone resorption and calpain-dependent actin cytoskeleton organization in osteoclasts via anion exchange-dependent control of pH. Essential for intracellular pH regulation in CD8(+) T-cells upon CD3 stimulation, modulating CD8(+) T-cell responses. Its function is as follows. Plays a critical role in male fertility and spermiogenesis. The sequence is that of Anion exchange protein 2 (Slc4a2) from Mus musculus (Mouse).